Reading from the N-terminus, the 91-residue chain is Small ribosomal subunit protein uS15 (91 aa).

The protein belongs to the universal ribosomal protein uS15 family. In terms of assembly, part of the 30S ribosomal subunit. Forms a bridge to the 50S subunit in the 70S ribosome, contacting the 23S rRNA.

Its function is as follows. One of the primary rRNA binding proteins, it binds directly to 16S rRNA where it helps nucleate assembly of the platform of the 30S subunit by binding and bridging several RNA helices of the 16S rRNA. Functionally, forms an intersubunit bridge (bridge B4) with the 23S rRNA of the 50S subunit in the ribosome. The polypeptide is Small ribosomal subunit protein uS15 (Deinococcus radiodurans (strain ATCC 13939 / DSM 20539 / JCM 16871 / CCUG 27074 / LMG 4051 / NBRC 15346 / NCIMB 9279 / VKM B-1422 / R1)).